A 217-amino-acid polypeptide reads, in one-letter code: Protein-L-isoaspartate O-methyltransferase (217 aa).

Residue S62 is part of the active site.

Belongs to the methyltransferase superfamily. L-isoaspartyl/D-aspartyl protein methyltransferase family.

The protein localises to the cytoplasm. It carries out the reaction [protein]-L-isoaspartate + S-adenosyl-L-methionine = [protein]-L-isoaspartate alpha-methyl ester + S-adenosyl-L-homocysteine. Its function is as follows. Catalyzes the methyl esterification of L-isoaspartyl residues in peptides and proteins that result from spontaneous decomposition of normal L-aspartyl and L-asparaginyl residues. It plays a role in the repair and/or degradation of damaged proteins. The sequence is that of Protein-L-isoaspartate O-methyltransferase from Trichlorobacter lovleyi (strain ATCC BAA-1151 / DSM 17278 / SZ) (Geobacter lovleyi).